The following is a 445-amino-acid chain: Pre-B-cell leukemia transcription factor 2 (445 aa).

Positions 13 to 44 (VGIPGLPIHGGPQTLTPHPMHEPPTDNGEPRK) are disordered. A compositionally biased stretch (basic and acidic residues) spans 31 to 44 (PMHEPPTDNGEPRK). A PBC domain is found at 42–236 (PRKQDIGDIL…VMILRSRFLD (195 aa)). Residues 49–128 (DILQQIMTIT…EGVAGPEKGG (80 aa)) form a PBC-A region. The PBC-B stretch occupies residues 131 to 236 (AAAAAAAAAS…VMILRSRFLD (106 aa)). A DNA-binding region (homeobox; TALE-type) is located at residues 237 to 299 (ARRKRRNFSK…NKRIRYKKNI (63 aa)). Positions 319 to 332 (QGGHSGANSPTTPT) are enriched in polar residues. Residues 319–338 (QGGHSGANSPTTPTSAGSGG) form a disordered region.

The protein belongs to the TALE/PBX homeobox family.

It localises to the nucleus. In terms of biological role, transcriptional activator that binds the sequence 5'-ATCAATCAA-3'. In Xenopus laevis (African clawed frog), this protein is Pre-B-cell leukemia transcription factor 2 (pbx2).